The primary structure comprises 405 residues: ATP phosphoribosyltransferase regulatory subunit (405 aa).

Belongs to the class-II aminoacyl-tRNA synthetase family. HisZ subfamily. Heteromultimer composed of HisG and HisZ subunits.

It is found in the cytoplasm. The protein operates within amino-acid biosynthesis; L-histidine biosynthesis; L-histidine from 5-phospho-alpha-D-ribose 1-diphosphate: step 1/9. In terms of biological role, required for the first step of histidine biosynthesis. May allow the feedback regulation of ATP phosphoribosyltransferase activity by histidine. In Oceanobacillus iheyensis (strain DSM 14371 / CIP 107618 / JCM 11309 / KCTC 3954 / HTE831), this protein is ATP phosphoribosyltransferase regulatory subunit.